The primary structure comprises 365 residues: Glycosyltransferase 8 domain-containing protein 1 (365 aa).

Topologically, residues 1-4 (MTVR) are cytoplasmic. A helical; Signal-anchor for type II membrane protein membrane pass occupies residues 5–22 (RVNVVILVLLVVAFLIVL). Topologically, residues 23–365 (HRNLLNLNDF…HPIRKHVEEK (343 aa)) are lumenal. N-linked (GlcNAc...) asparagine glycans are attached at residues Asn-102, Asn-181, Asn-245, and Asn-253.

The protein belongs to the glycosyltransferase 8 family.

The protein localises to the membrane. In Danio rerio (Zebrafish), this protein is Glycosyltransferase 8 domain-containing protein 1 (glt8d1).